We begin with the raw amino-acid sequence, 680 residues long: DNA ligase (680 aa).

Residues D44 to D48, S94 to L95, and E124 each bind NAD(+). K126 serves as the catalytic N6-AMP-lysine intermediate. The NAD(+) site is built by R147, E181, K297, and K321. Zn(2+) contacts are provided by C415, C418, C433, and C438. The BRCT domain occupies D598 to K680.

It belongs to the NAD-dependent DNA ligase family. LigA subfamily. The cofactor is Mg(2+). Mn(2+) serves as cofactor.

It catalyses the reaction NAD(+) + (deoxyribonucleotide)n-3'-hydroxyl + 5'-phospho-(deoxyribonucleotide)m = (deoxyribonucleotide)n+m + AMP + beta-nicotinamide D-nucleotide.. Its function is as follows. DNA ligase that catalyzes the formation of phosphodiester linkages between 5'-phosphoryl and 3'-hydroxyl groups in double-stranded DNA using NAD as a coenzyme and as the energy source for the reaction. It is essential for DNA replication and repair of damaged DNA. In Leuconostoc mesenteroides subsp. mesenteroides (strain ATCC 8293 / DSM 20343 / BCRC 11652 / CCM 1803 / JCM 6124 / NCDO 523 / NBRC 100496 / NCIMB 8023 / NCTC 12954 / NRRL B-1118 / 37Y), this protein is DNA ligase.